We begin with the raw amino-acid sequence, 427 residues long: Enolase (427 aa).

Residue glutamine 163 coordinates (2R)-2-phosphoglycerate. Glutamate 205 serves as the catalytic Proton donor. The Mg(2+) site is built by aspartate 242, glutamate 285, and aspartate 312. 4 residues coordinate (2R)-2-phosphoglycerate: lysine 337, arginine 366, serine 367, and lysine 388. Lysine 337 acts as the Proton acceptor in catalysis.

It belongs to the enolase family. Mg(2+) is required as a cofactor.

It is found in the cytoplasm. The protein localises to the secreted. The protein resides in the cell surface. The enzyme catalyses (2R)-2-phosphoglycerate = phosphoenolpyruvate + H2O. It participates in carbohydrate degradation; glycolysis; pyruvate from D-glyceraldehyde 3-phosphate: step 4/5. Catalyzes the reversible conversion of 2-phosphoglycerate (2-PG) into phosphoenolpyruvate (PEP). It is essential for the degradation of carbohydrates via glycolysis. This Xanthobacter autotrophicus (strain ATCC BAA-1158 / Py2) protein is Enolase.